Reading from the N-terminus, the 545-residue chain is MVKTILYKDTARWTLEKGFDALTEAVAVTLGPKGRNIVLEKKFGAPQIVNDGVTIAKEIELEDPAENTGISLLRQAASKTNDVAGDGTTTAIVLAHAMLKEGLRNVTAGADPLTVKRGIDKATEFVIEKIQEHARPIKDSRDIEQVATISAGNDPEVGRIVAEAMERVGKEGVISLEEGRSTTTELEVTEGMRFDRGYVSPYFVTDPERMEAVLEEPHILITDRKITMVQDLVPILEQIARTGKPLLIIADDIEKEALATLVVNHLRGVLRVAAVKAPGFGAQRKAVLEDIAALTGGQVISEDTGLKLENVRLEMLGKARRAIVTKDDTTIVAEGNEEAVKARIEQIRRQIQEVESSYDKEKLQQRLAKLAGGVAVIKVGAATETELKDRKLRLEDAINATKAAVEEGIVPGGGTTIAHIAPQLEEWAKSQMKDEELTGTMIVARALYAPLRRIADNAGANGAVIVERVRELPFDEGYDAVANKFVNMFEAGIVDPAKVTRSALQNAASIGGMVLTTEGVVVEKPDKQAKAPAGVGPGPGEGFDY.

ATP contacts are provided by residues 29–32 (TLGP), 86–90 (DGTTT), G413, 479–481 (DAV), and D495. The tract at residues 526 to 545 (DKQAKAPAGVGPGPGEGFDY) is disordered. A compositionally biased stretch (gly residues) spans 535–545 (VGPGPGEGFDY).

It belongs to the chaperonin (HSP60) family. As to quaternary structure, forms a cylinder of 14 subunits composed of two heptameric rings stacked back-to-back. Interacts with the co-chaperonin GroES.

It localises to the cytoplasm. It carries out the reaction ATP + H2O + a folded polypeptide = ADP + phosphate + an unfolded polypeptide.. Functionally, together with its co-chaperonin GroES, plays an essential role in assisting protein folding. The GroEL-GroES system forms a nano-cage that allows encapsulation of the non-native substrate proteins and provides a physical environment optimized to promote and accelerate protein folding. This chain is Chaperonin GroEL 3, found in Trichormus variabilis (strain ATCC 29413 / PCC 7937) (Anabaena variabilis).